Here is a 123-residue protein sequence, read N- to C-terminus: Ribonuclease P protein component (123 aa).

Belongs to the RnpA family. As to quaternary structure, consists of a catalytic RNA component (M1 or rnpB) and a protein subunit.

The enzyme catalyses Endonucleolytic cleavage of RNA, removing 5'-extranucleotides from tRNA precursor.. Functionally, RNaseP catalyzes the removal of the 5'-leader sequence from pre-tRNA to produce the mature 5'-terminus. It can also cleave other RNA substrates such as 4.5S RNA. The protein component plays an auxiliary but essential role in vivo by binding to the 5'-leader sequence and broadening the substrate specificity of the ribozyme. This is Ribonuclease P protein component from Herpetosiphon aurantiacus (strain ATCC 23779 / DSM 785 / 114-95).